Reading from the N-terminus, the 430-residue chain is Aspartate aminotransferase, mitochondrial (430 aa).

The transit peptide at 1 to 29 (MALLHSGRFLSGVAAAFHPGLAAAASARA) directs the protein to the mitochondrion. A Phosphothreonine modification is found at T48. At K59 the chain carries N6-acetyllysine. Residue G65 participates in substrate binding. At K73 the chain carries N6-acetyllysine; alternate. K73 bears the N6-succinyllysine; alternate mark. K82 carries the post-translational modification N6-acetyllysine. K90 bears the N6-acetyllysine; alternate mark. At K90 the chain carries N6-succinyllysine; alternate. Y96 is modified (3'-nitrotyrosine; alternate). Y96 is subject to Phosphotyrosine; alternate. 2 positions are modified to N6-acetyllysine; alternate: K107 and K122. 2 positions are modified to N6-succinyllysine; alternate: K107 and K122. Position 143 is a phosphoserine (S143). K159 bears the N6-acetyllysine; alternate mark. K159 carries the post-translational modification N6-succinyllysine; alternate. W162 serves as a coordination point for substrate. K185 carries the post-translational modification N6-acetyllysine; alternate. Residue K185 is modified to N6-succinyllysine; alternate. Residue N215 coordinates substrate. Residue K227 is modified to N6-succinyllysine. K234 bears the N6-acetyllysine mark. 2 positions are modified to N6-acetyllysine; alternate: K279 and K296. K279 carries the N6-(pyridoxal phosphate)lysine; alternate modification. At K296 the chain carries N6-succinyllysine; alternate. At K302 the chain carries N6-acetyllysine. The residue at position 309 (K309) is an N6-acetyllysine; alternate. K309 is modified (N6-succinyllysine; alternate). Position 313 is an asymmetric dimethylarginine (R313). At K338 the chain carries N6-acetyllysine; alternate. Residue K338 is modified to N6-succinyllysine; alternate. The residue at position 345 (K345) is an N6-acetyllysine. N6-acetyllysine; alternate is present on K363. The residue at position 363 (K363) is an N6-succinyllysine; alternate. An N6-acetyllysine mark is found at K364 and K387. An N6-acetyllysine; alternate mark is found at K396 and K404. An N6-succinyllysine; alternate mark is found at K396 and K404. Residue R407 participates in substrate binding.

This sequence belongs to the class-I pyridoxal-phosphate-dependent aminotransferase family. Homodimer. It depends on pyridoxal 5'-phosphate as a cofactor.

The protein resides in the mitochondrion matrix. Its subcellular location is the cell membrane. It catalyses the reaction L-aspartate + 2-oxoglutarate = oxaloacetate + L-glutamate. The enzyme catalyses L-kynurenine + 2-oxoglutarate = 4-(2-aminophenyl)-2,4-dioxobutanoate + L-glutamate. Its function is as follows. Catalyzes the irreversible transamination of the L-tryptophan metabolite L-kynurenine to form kynurenic acid (KA). As a member of the malate-aspartate shuttle, it has a key role in the intracellular NAD(H) redox balance. Is important for metabolite exchange between mitochondria and cytosol, and for amino acid metabolism. Facilitates cellular uptake of long-chain free fatty acids. The polypeptide is Aspartate aminotransferase, mitochondrial (GOT2) (Bos taurus (Bovine)).